We begin with the raw amino-acid sequence, 353 residues long: Protein MGF 360-9L (353 aa).

Belongs to the asfivirus MGF 360 family. Interacts with host STAT1; this interaction mediates STAT1 degradation through apoptosis. Interacts with host STAT2; this interaction mediates STAT2 degradation through the proteasome.

Its subcellular location is the host cytoplasm. In terms of biological role, plays a role in virus cell tropism, and may be required for efficient virus replication in macrophages. In addition, inhibits IFN-beta-induced IFN-stimulated genes (ISGs) transcription. Mechanistically, degrades host STAT1 and STAT2 through apoptosis and ubiquitin-proteasome pathways respectively. The chain is Protein MGF 360-9L from African swine fever virus (isolate Tick/Malawi/Lil 20-1/1983) (ASFV).